The following is a 545-amino-acid chain: 2-succinyl-5-enolpyruvyl-6-hydroxy-3-cyclohexene-1-carboxylate synthase (545 aa).

This sequence belongs to the TPP enzyme family. MenD subfamily. As to quaternary structure, homodimer. Mg(2+) is required as a cofactor. Mn(2+) serves as cofactor. Requires thiamine diphosphate as cofactor.

The catalysed reaction is isochorismate + 2-oxoglutarate + H(+) = 5-enolpyruvoyl-6-hydroxy-2-succinyl-cyclohex-3-ene-1-carboxylate + CO2. Its pathway is quinol/quinone metabolism; 1,4-dihydroxy-2-naphthoate biosynthesis; 1,4-dihydroxy-2-naphthoate from chorismate: step 2/7. The protein operates within quinol/quinone metabolism; menaquinone biosynthesis. Catalyzes the thiamine diphosphate-dependent decarboxylation of 2-oxoglutarate and the subsequent addition of the resulting succinic semialdehyde-thiamine pyrophosphate anion to isochorismate to yield 2-succinyl-5-enolpyruvyl-6-hydroxy-3-cyclohexene-1-carboxylate (SEPHCHC). The chain is 2-succinyl-5-enolpyruvyl-6-hydroxy-3-cyclohexene-1-carboxylate synthase from Nocardia farcinica (strain IFM 10152).